The sequence spans 467 residues: Bifunctional enzyme LpxC/FabZ (467 aa).

A UDP-3-O-acyl-N-acetylglucosamine deacetylase region spans residues 1–306; it reads MLIHQRTLQN…FVKQLKKYAD (306 aa). Residues H79, H264, and D268 each coordinate Zn(2+). Catalysis depends on H291, which acts as the Proton donor. A 3-hydroxyacyl-[acyl-carrier-protein] dehydratase region spans residues 307 to 467; the sequence is RNKLARQYQH…LMATVMEKKN (161 aa). Residue H370 is part of the active site.

It in the N-terminal section; belongs to the LpxC family. The protein in the C-terminal section; belongs to the thioester dehydratase family. Requires Zn(2+) as cofactor.

The protein localises to the cytoplasm. It carries out the reaction a UDP-3-O-[(3R)-3-hydroxyacyl]-N-acetyl-alpha-D-glucosamine + H2O = a UDP-3-O-[(3R)-3-hydroxyacyl]-alpha-D-glucosamine + acetate. It catalyses the reaction a (3R)-hydroxyacyl-[ACP] = a (2E)-enoyl-[ACP] + H2O. Its pathway is glycolipid biosynthesis; lipid IV(A) biosynthesis; lipid IV(A) from (3R)-3-hydroxytetradecanoyl-[acyl-carrier-protein] and UDP-N-acetyl-alpha-D-glucosamine: step 2/6. Functionally, catalyzes the hydrolysis of UDP-3-O-myristoyl-N-acetylglucosamine to form UDP-3-O-myristoylglucosamine and acetate, the committed step in lipid A biosynthesis. In terms of biological role, involved in unsaturated fatty acids biosynthesis. Catalyzes the dehydration of short chain beta-hydroxyacyl-ACPs and long chain saturated and unsaturated beta-hydroxyacyl-ACPs. The protein is Bifunctional enzyme LpxC/FabZ (lpxC/fabZ) of Chlorobaculum tepidum (strain ATCC 49652 / DSM 12025 / NBRC 103806 / TLS) (Chlorobium tepidum).